Consider the following 503-residue polypeptide: MELIPNLSIETWVLLAISLVLIYIYGTYSHGTFKKLGIPGPKPLPFFGTILGYHDGTWKFDETCYKKYGKIWGFYDGRVPVLAIADPEIIKTVLVKECYSNFTNRRSFGPVGFMKKSITISKDEEWKRLRTLLSPAFTSGKLKEMFPIIGQYGDTLVKNLRREEEKGKPVNMKEILGAYSMDVITGTSFGVNVDSLNNPEDPFVQKARKILKFNFFDPFILSIILFPFLTTIYDLLRFSIFPRQSTNFFKKFITTMKKNRLHSNQKTRMDFFQLMMNTQNSKGKESQKALSDLEMAAQAIIFIFAGYESTSTSICLVLYELATHPDVQKKLHDEIDSALPNKAPVTYDVLMGMEYLDMVINEGLRLYPIANRLERISKKAVEINGLFIPKGITVMVPTYPLHRDPEYWPEPEEFRPERFSKENKGSIDPYVYMPFGNGPRNCIGMRFALLSMKLAVVSVLQNFTLQTCEQTENHLKFARQIILQPENPIILKIISRDKPITGA.

Residue cysteine 442 coordinates heme.

Belongs to the cytochrome P450 family. Heme serves as cofactor.

It is found in the endoplasmic reticulum membrane. The protein resides in the microsome membrane. The enzyme catalyses lithocholate + reduced [NADPH--hemoprotein reductase] + O2 = 6beta-hydroxylithocholate + oxidized [NADPH--hemoprotein reductase] + H2O + H(+). Its function is as follows. Catalyzes the 6 beta-hydroxylation of lithocholic acid and steroid hormones. The sequence is that of Lithocholate 6-beta-hydroxylase (CYP3A10) from Mesocricetus auratus (Golden hamster).